Consider the following 361-residue polypeptide: Phospho-N-acetylmuramoyl-pentapeptide-transferase (361 aa).

10 helical membrane-spanning segments follow: residues 27–47 (GAFF…INLL), 72–92 (TPTM…LLWA), 98–118 (YVWL…MDDF), 135–155 (LAMG…LHPE), 169–189 (TLIN…AGSA), 200–220 (GLAI…AYAV), 240–260 (IFVF…YNAP), 263–283 (AVFM…AIAV), 289–309 (IVLV…IIQV), and 338–358 (QIVI…LATL).

This sequence belongs to the glycosyltransferase 4 family. MraY subfamily. Mg(2+) serves as cofactor.

Its subcellular location is the cell inner membrane. The enzyme catalyses UDP-N-acetyl-alpha-D-muramoyl-L-alanyl-gamma-D-glutamyl-meso-2,6-diaminopimeloyl-D-alanyl-D-alanine + di-trans,octa-cis-undecaprenyl phosphate = di-trans,octa-cis-undecaprenyl diphospho-N-acetyl-alpha-D-muramoyl-L-alanyl-D-glutamyl-meso-2,6-diaminopimeloyl-D-alanyl-D-alanine + UMP. It participates in cell wall biogenesis; peptidoglycan biosynthesis. Functionally, catalyzes the initial step of the lipid cycle reactions in the biosynthesis of the cell wall peptidoglycan: transfers peptidoglycan precursor phospho-MurNAc-pentapeptide from UDP-MurNAc-pentapeptide onto the lipid carrier undecaprenyl phosphate, yielding undecaprenyl-pyrophosphoryl-MurNAc-pentapeptide, known as lipid I. This chain is Phospho-N-acetylmuramoyl-pentapeptide-transferase, found in Dinoroseobacter shibae (strain DSM 16493 / NCIMB 14021 / DFL 12).